A 760-amino-acid chain; its full sequence is GLC7-interacting protein 4 (760 aa).

2 disordered regions span residues 449–573 and 593–626; these read KKKP…SLQS and KSASTPNPSASSSLAPSPKVSSINNTSSGKSSST. 2 stretches are compositionally biased toward low complexity: residues 454–474 and 494–506; these read ITKLPASSSPSPSPTSSASPS and SSRSPSVSPVRTT. A phosphoserine mark is found at serine 497 and serine 501. Residues 512–525 show a composition bias toward basic and acidic residues; sequence AETKKSVVSPEKRK. Positions 534 to 554 are enriched in polar residues; it reads SSSLQSYTNKQQTSYLNSTRH. 2 stretches are compositionally biased toward low complexity: residues 561 to 573 and 594 to 626; these read SKLNNQRSNSLQS and SASTPNPSASSSLAPSPKVSSINNTSSGKSSST. Residue serine 609 is modified to Phosphoserine.

This sequence belongs to the GIP4 family. In terms of assembly, interacts with GLC7.

The protein localises to the cytoplasm. GLC7 phosphatase-regulatory protein involved in GLC7 subcellular redistribution and chromosome segregation. This is GLC7-interacting protein 4 (GIP4) from Saccharomyces cerevisiae (strain ATCC 204508 / S288c) (Baker's yeast).